The sequence spans 853 residues: DNA mismatch repair protein MutS (853 aa).

614 to 621 (GPNMGGKS) serves as a coordination point for ATP.

This sequence belongs to the DNA mismatch repair MutS family.

Its function is as follows. This protein is involved in the repair of mismatches in DNA. It is possible that it carries out the mismatch recognition step. This protein has a weak ATPase activity. The sequence is that of DNA mismatch repair protein MutS from Escherichia coli O6:K15:H31 (strain 536 / UPEC).